A 178-amino-acid polypeptide reads, in one-letter code: 6,7-dimethyl-8-ribityllumazine synthase (178 aa).

5-amino-6-(D-ribitylamino)uracil is bound by residues F23, 61–63 (SFE), and 85–87 (AVI). Position 90-91 (90-91 (QT)) interacts with (2S)-2-hydroxy-3-oxobutyl phosphate. H93 (proton donor) is an active-site residue. Y118 is a 5-amino-6-(D-ribitylamino)uracil binding site. R132 is a (2S)-2-hydroxy-3-oxobutyl phosphate binding site.

The protein belongs to the DMRL synthase family.

It catalyses the reaction (2S)-2-hydroxy-3-oxobutyl phosphate + 5-amino-6-(D-ribitylamino)uracil = 6,7-dimethyl-8-(1-D-ribityl)lumazine + phosphate + 2 H2O + H(+). Its pathway is cofactor biosynthesis; riboflavin biosynthesis; riboflavin from 2-hydroxy-3-oxobutyl phosphate and 5-amino-6-(D-ribitylamino)uracil: step 1/2. Its function is as follows. Catalyzes the formation of 6,7-dimethyl-8-ribityllumazine by condensation of 5-amino-6-(D-ribitylamino)uracil with 3,4-dihydroxy-2-butanone 4-phosphate. This is the penultimate step in the biosynthesis of riboflavin. The polypeptide is 6,7-dimethyl-8-ribityllumazine synthase (Thermosynechococcus vestitus (strain NIES-2133 / IAM M-273 / BP-1)).